The primary structure comprises 575 residues: Potassium-transporting ATPase potassium-binding subunit (575 aa).

Transmembrane regions (helical) follow at residues 3–23 (FEGVLQIVATLVLMVAIVPFF), 69–89 (AVLASNAAMFVPVFAVLLLQG), 136–156 (CFQFLMFTSAATGLAVGIAFI), 178–198 (ILMPISIAFAVVLLSQGVPQS), 266–286 (LLEILLLLAVPTSLIYTFGVL), 293–313 (GWVLFGTIFVLFVGLVGVAAL), 340–360 (FGWAQSALFATATTGTMTGAV), 367–387 (LTPLAGLVTLFNLCLQVIWGG), 391–411 (GIAYILVFLIIAVFLTGLMVG), 431–451 (IIFLVHPVIILVPTAIALAIP), 498–518 (VVLLLGRYAPIVALLALAGGL), and 543–563 (AGTILILGALTFFPVFALGPI).

The protein belongs to the KdpA family. In terms of assembly, the system is composed of three essential subunits: KdpA, KdpB and KdpC.

Its subcellular location is the cell inner membrane. Functionally, part of the high-affinity ATP-driven potassium transport (or Kdp) system, which catalyzes the hydrolysis of ATP coupled with the electrogenic transport of potassium into the cytoplasm. This subunit binds the periplasmic potassium ions and delivers the ions to the membrane domain of KdpB through an intramembrane tunnel. This chain is Potassium-transporting ATPase potassium-binding subunit, found in Gloeobacter violaceus (strain ATCC 29082 / PCC 7421).